Here is a 271-residue protein sequence, read N- to C-terminus: MNSSQISLKMKHGRVNMQKKPSKCSECGRFFTQRSSLTQHQRIHRGEKPYVCSECGSCFRKQSNLTQHLRIHTGEKPYKCNECEKAFQTKAILVQHLRIHTGEKPYKCNECGKAFCQSPSLIKHQRIHTGEKPYKCAECGKAFSQSVCLTRHQRSHSGDKPFKCNECGKAFNQSACLMQHQRIHSGEKPYTCTECGKAFTQNSSLVEHERTHTGEKLYKCSECEKTFRKQAHLSEHYRIHTGEKPYECFGCGKSFRHSSALLRHQRLHAGE.

C2H2-type zinc fingers lie at residues 22-44, 50-72, 78-100, 106-128, 134-156, 162-184, 190-212, 218-240, and 246-268; these read SKCS…QRIH, YVCS…LRIH, YKCN…LRIH, YKCN…QRIH, YKCA…QRSH, FKCN…QRIH, YTCT…ERTH, YKCS…YRIH, and YECF…QRLH.

It belongs to the krueppel C2H2-type zinc-finger protein family.

It localises to the nucleus. The protein resides in the nucleolus. Functionally, may be involved in transcriptional regulation. Essential for Golgi structural integrity. This Pongo abelii (Sumatran orangutan) protein is Zinc finger protein 501 (ZNF501).